A 175-amino-acid polypeptide reads, in one-letter code: Vesicle-associated membrane protein-associated protein SCS22 (175 aa).

One can recognise an MSP domain in the interval 1-125 (MRIVPEKLVF…DDIVFKKIKI (125 aa)). The Cytoplasmic portion of the chain corresponds to 1 to 154 (MRIVPEKLVF…RAPSAGNGQS (154 aa)). The segment at 133–152 (RKPSGNHDAESARAPSAGNG) is disordered. Residues 155 to 175 (LSSRALLIITVIALLVGWIYY) traverse the membrane as a helical; Anchor for type IV membrane protein segment.

This sequence belongs to the VAMP-associated protein (VAP) (TC 9.B.17) family.

The protein localises to the membrane. In terms of biological role, targets proteins containing a FFAT motif to membranes. Involved in regulation of phospholipid metabolism. In Saccharomyces cerevisiae (strain ATCC 204508 / S288c) (Baker's yeast), this protein is Vesicle-associated membrane protein-associated protein SCS22 (SCS22).